The primary structure comprises 149 residues: Protein E6 (149 aa).

Zinc fingers lie at residues 30–66 and 103–139; these read CVYCKGQLTETEVLDFAFTDLTIVYRDDTPHGVCTKC and CITCQRPLCPEEKQRHLDKKKRFHNIGGRWTGRCIAC. Positions 147-149 match the PDZ-binding domain motif; it reads TQV.

This sequence belongs to the papillomaviridae E6 protein family. Forms homodimers. Interacts with ubiquitin-protein ligase UBE3A/E6-AP and thus forms a complex with human TP53. Interacts with human NFX1 and MAGI3. Interacts with human IRF3; this interaction inhibits the establishment of antiviral state. Interacts with human TYK2; this interaction inhibits JAK-STAT activation by interferon alpha. Interacts with host DLG1; this interaction leads to the proteasomal degradation of DLG1.

It localises to the host cytoplasm. The protein localises to the host nucleus. Plays a major role in the induction and maintenance of cellular transformation. Acts mainly as an oncoprotein by stimulating the destruction of many host cell key regulatory proteins. E6 associates with host UBE3A/E6-AP ubiquitin-protein ligase, and inactivates tumor suppressors TP53 and TP73 by targeting them to the 26S proteasome for degradation. In turn, DNA damage and chromosomal instabilities increase and lead to cell proliferation and cancer development. The complex E6/E6AP targets several other substrates to degradation via the proteasome including host DLG1 or NFX1, a repressor of human telomerase reverse transcriptase (hTERT). The resulting increased expression of hTERT prevents the shortening of telomere length leading to cell immortalization. Other cellular targets including BAK1, Fas-associated death domain-containing protein (FADD) and procaspase 8, are degraded by E6/E6AP causing inhibition of apoptosis. E6 also inhibits immune response by interacting with host IRF3 and TYK2. These interactions prevent IRF3 transcriptional activities and inhibit TYK2-mediated JAK-STAT activation by interferon alpha resulting in inhibition of the interferon signaling pathway. In Human papillomavirus 31, this protein is Protein E6.